A 205-amino-acid polypeptide reads, in one-letter code: High frequency lysogenization protein HflD homolog (205 aa).

This sequence belongs to the HflD family.

Its subcellular location is the cytoplasm. It localises to the cell inner membrane. In Shewanella sp. (strain MR-4), this protein is High frequency lysogenization protein HflD homolog.